The chain runs to 744 residues: Protein zyg-11 homolog B (744 aa).

LRR repeat units follow at residues 185–208 (LPRL…LACK), 216–236 (MHHL…VREL), and 237–261 (KHLN…LLEQ).

The protein belongs to the zyg-11 family. In terms of assembly, interacts with ELOC/Elongin C. Part of an E3 ubiquitin ligase complex including ZYG11B, CUL2 and Elongin BC.

Its function is as follows. Serves as substrate adapter subunit in the E3 ubiquitin ligase complex ZYG11B-CUL2-Elongin BC. Acts redudantly with ZER1 to target substrates bearing N-terminal glycine degrons for proteasomal degradation. Involved in the clearance of proteolytic fragments generated by caspase cleavage during apoptosis since N-terminal glycine degrons are strongly enriched at caspase cleavage sites. Also important in the quality control of protein N-myristoylation in which N-terminal glycine degrons are conditionally exposed after a failure of N-myristoylation. This chain is Protein zyg-11 homolog B, found in Mus musculus (Mouse).